Reading from the N-terminus, the 216-residue chain is Deoxyribose-phosphate aldolase (216 aa).

Aspartate 89 acts as the Proton donor/acceptor in catalysis. Lysine 153 (schiff-base intermediate with acetaldehyde) is an active-site residue. The active-site Proton donor/acceptor is the lysine 182.

This sequence belongs to the DeoC/FbaB aldolase family. DeoC type 1 subfamily.

The protein resides in the cytoplasm. The enzyme catalyses 2-deoxy-D-ribose 5-phosphate = D-glyceraldehyde 3-phosphate + acetaldehyde. The protein operates within carbohydrate degradation; 2-deoxy-D-ribose 1-phosphate degradation; D-glyceraldehyde 3-phosphate and acetaldehyde from 2-deoxy-alpha-D-ribose 1-phosphate: step 2/2. In terms of biological role, catalyzes a reversible aldol reaction between acetaldehyde and D-glyceraldehyde 3-phosphate to generate 2-deoxy-D-ribose 5-phosphate. The chain is Deoxyribose-phosphate aldolase from Treponema denticola (strain ATCC 35405 / DSM 14222 / CIP 103919 / JCM 8153 / KCTC 15104).